We begin with the raw amino-acid sequence, 1034 residues long: MIMEELQGSDTPRAGLEMSKRDILRHTKRAWAPLDGHLLPDSEEENPMVTMYVQENSKQESIQQWLDSGFFVSVNENFQQTINHTASLHEQGIIQMTVKDYMRSLHQFSETPTLSRGTSFNSCYSTTGVPQSIPEWLEFWEKDPVEILLDLGFGADEPDICTQIPARFLGYSSAARGINIHVFLEAQKQRMDFENPDLYGRFQQLEILDHVTNAFSSLLDGVKTQQNQHEEKAERQAMQNPSSSGAKEHKRKMSQLLKRASRQTSRMDGNPALSKSCKTEHEIPTLPTKPWDPRVELQVASISHDASQMLPLIECGSAQVHNDLSPCPPLCPPPHALLDKPWPCSCTLAKQSPHTCLSEGSVRRRNWKEKWNHMDRLKNLSHIVSKGPDSFEMEEVQSFEEDTGNPLILTSGIVGTRVDRTNSCQSDSSGFLEELPELQPLQVSSMTGSQSPTVCRGCKPRDQSHSPASQQDSLQESYGSKSKSMTSSSLLSQDWSTLEENASASVVEEELQLKAMEEPPEIVNPDMTLIKTIMVGEHPESVAGPVVTSTSTCNNTMGVLVTHVTEKEDRSVGHKGTRKMLIQRHHFESPRSFRIDQPSDNFYHVDSEITKTEDNCKVCPDTKQSSLVQERPAQHSHQHRGAMPYKGDLVQTSEKSIPHLDKPPGHVPTDSNAASSWSVTTQMSSNLVSAAQRVADLGTYNKGTAFECTPCDPLNTTDLKLQTETRQVKDVAVQTYAHECKLRPSHNDFIHGPRPLAKSISLDTGFPSISATGFCHTIPAHCCVCCHHCPNCQWRRQSPGPEPSICRHSLYSQAEDPKVQFMKTLKILQDTTVRDLCSCTVYEMETMKMVCQSFREHLEEIEQHFMGQQALYPRDMSEEEREEAEYLRTLREALRQQVAELAFQLGDRARQIKEGILLQLDLLCEELPEHCDNLPQCNWTEGKHGQRSCVQTHAVAPDPTLPASSGQWTPCSGMTQPVALSPSHLETRGGISLQSPARAESGPGPSLSHVGEKSLLDQSGFDDLCTKCNVQEQL.

Disordered stretches follow at residues Lys223–Pro290, Gln442–Thr486, and Gln624–Ser678. Composition is skewed to polar residues over residues Val443–Thr453 and His465–Glu476. A compositionally biased stretch (low complexity) spans Ser477 to Thr486. Positions Thr669 to Ser678 are enriched in polar residues. The stretch at Glu843–Ala902 forms a coiled coil.

This chain is Protein ITPRID1 (Itprid1), found in Mus musculus (Mouse).